Reading from the N-terminus, the 399-residue chain is S-adenosylmethionine synthase (399 aa).

His-15 provides a ligand contact to ATP. Asp-17 contacts Mg(2+). Residue Glu-43 coordinates K(+). Glu-56 and Gln-99 together coordinate L-methionine. Positions 99-109 (QSADIAQGVDN) are flexible loop. Residues 174–176 (DGK), 244–245 (RF), Asp-253, 259–260 (RK), Ala-276, and Lys-280 each bind ATP. Residue Asp-253 coordinates L-methionine. Lys-284 serves as a coordination point for L-methionine.

It belongs to the AdoMet synthase family. Homotetramer; dimer of dimers. Mg(2+) is required as a cofactor. The cofactor is K(+).

It is found in the cytoplasm. The catalysed reaction is L-methionine + ATP + H2O = S-adenosyl-L-methionine + phosphate + diphosphate. Its pathway is amino-acid biosynthesis; S-adenosyl-L-methionine biosynthesis; S-adenosyl-L-methionine from L-methionine: step 1/1. In terms of biological role, catalyzes the formation of S-adenosylmethionine (AdoMet) from methionine and ATP. The overall synthetic reaction is composed of two sequential steps, AdoMet formation and the subsequent tripolyphosphate hydrolysis which occurs prior to release of AdoMet from the enzyme. The chain is S-adenosylmethionine synthase from Salinispora tropica (strain ATCC BAA-916 / DSM 44818 / JCM 13857 / NBRC 105044 / CNB-440).